The following is a 93-amino-acid chain: MSAAARGLVRLVKSYQRHLSPRKPAPTCRFTPTCSQYAVEAIERHGALKGAWLAAWRVLRCNPLVPGGCDPVPEHFPSWRGPHPKTPSRKTPE.

The tract at residues 72-93 is disordered; sequence VPEHFPSWRGPHPKTPSRKTPE. Basic residues predominate over residues 82-93; that stretch reads PHPKTPSRKTPE.

The protein belongs to the UPF0161 family.

It localises to the cell membrane. Could be involved in insertion of integral membrane proteins into the membrane. The sequence is that of Putative membrane protein insertion efficiency factor from Deinococcus geothermalis (strain DSM 11300 / CIP 105573 / AG-3a).